A 307-amino-acid chain; its full sequence is Protoheme IX farnesyltransferase (307 aa).

Transmembrane regions (helical) follow at residues Met32 to Phe52, Phe65 to Ile85, Pro108 to Leu128, Pro131 to Trp151, Leu158 to Ile178, Ile186 to Ala206, Leu251 to Phe271, and Phe287 to Phe307.

This sequence belongs to the UbiA prenyltransferase family. Protoheme IX farnesyltransferase subfamily. As to quaternary structure, interacts with CtaA.

It is found in the cell membrane. The enzyme catalyses heme b + (2E,6E)-farnesyl diphosphate + H2O = Fe(II)-heme o + diphosphate. The protein operates within porphyrin-containing compound metabolism; heme O biosynthesis; heme O from protoheme: step 1/1. Functionally, converts heme B (protoheme IX) to heme O by substitution of the vinyl group on carbon 2 of heme B porphyrin ring with a hydroxyethyl farnesyl side group. This Bacillus anthracis (strain A0248) protein is Protoheme IX farnesyltransferase.